Consider the following 709-residue polypeptide: Homeobox-leucine zipper protein TF1 (709 aa).

Residues 66 to 125 (RKRRLQRLTGKQSEVLEGFFSICGHPDDGQKRHLSETTGLGLDQVKFWFQNKRTQVKTMC) constitute a DNA-binding region (homeobox). Residues 166 to 187 (NQLAVEMERLMGQSEWLQQEIA) are a coiled coil. The START domain occupies 212–441 (GQHDQQMIAE…MARQSARMRD (230 aa)).

Belongs to the HD-ZIP homeobox family. Class IV subfamily.

It localises to the nucleus. Its function is as follows. Probable transcription factor. The sequence is that of Homeobox-leucine zipper protein TF1 (TF1) from Oryza sativa subsp. japonica (Rice).